The primary structure comprises 197 residues: Protein jagunal (197 aa).

Topologically, residues 1–39 (MATRGGPMVAGTDGNDFEFRQRVAGTYQISLLNKSRLKY) are cytoplasmic. Residues 40–60 (CIFFHALLFFVMLAKLTSDIL) form a helical membrane-spanning segment. The Lumenal portion of the chain corresponds to 61–78 (DHLDIFVLEIEELEVPPP). A helical transmembrane segment spans residues 79–99 (LWWEYVWAASLLTSFLGLSAA). Over 100–109 (RGNKVREMQK) the chain is Cytoplasmic. A helical transmembrane segment spans residues 110–130 (YMVAILLFAILPLFYCFAYYF). Over 131–159 (SDVWEFATLDKSVELDETDIFVWRGYPYG) the chain is Lumenal. The chain crosses the membrane as a helical span at residues 160 to 180 (VFWYAFCFVGFQVHGFTLYFA). The Cytoplasmic segment spans residues 181–197 (YNLVKAWKARTATRKFQ).

Belongs to the jagunal family.

The protein localises to the endoplasmic reticulum membrane. Functionally, required for endoplasmic reticulum organization and proper vesicular traffic during vitellogenesis. Required for oocyte and bristle growth. The polypeptide is Protein jagunal (Drosophila melanogaster (Fruit fly)).